We begin with the raw amino-acid sequence, 459 residues long: tRNA modification GTPase MnmE (459 aa).

(6S)-5-formyl-5,6,7,8-tetrahydrofolate is bound by residues arginine 24, glutamate 82, and lysine 122. The region spanning 219–379 (GIKVVISGAP…LRQHLYFSFK (161 aa)) is the TrmE-type G domain. Residues 229-234 (NSGKSS), 248-254 (TNFPGTT), and 273-276 (DTAG) contribute to the GTP site. Serine 233 and threonine 254 together coordinate Mg(2+). Lysine 459 lines the (6S)-5-formyl-5,6,7,8-tetrahydrofolate pocket.

This sequence belongs to the TRAFAC class TrmE-Era-EngA-EngB-Septin-like GTPase superfamily. TrmE GTPase family. As to quaternary structure, homodimer. Heterotetramer of two MnmE and two MnmG subunits. The cofactor is K(+).

The protein localises to the cytoplasm. In terms of biological role, exhibits a very high intrinsic GTPase hydrolysis rate. Involved in the addition of a carboxymethylaminomethyl (cmnm) group at the wobble position (U34) of certain tRNAs, forming tRNA-cmnm(5)s(2)U34. The sequence is that of tRNA modification GTPase MnmE from Buchnera aphidicola subsp. Baizongia pistaciae (strain Bp).